The chain runs to 39 residues: Cytochrome b6-f complex subunit 5 (39 aa).

A helical transmembrane segment spans residues 5-25 (LLCGIVLGLVPITIVGLFVSA).

This sequence belongs to the PetG family. In terms of assembly, the 4 large subunits of the cytochrome b6-f complex are cytochrome b6, subunit IV (17 kDa polypeptide, PetD), cytochrome f and the Rieske protein, while the 4 small subunits are PetG, PetL, PetM and PetN. The complex functions as a dimer.

It localises to the cellular thylakoid membrane. Its function is as follows. Component of the cytochrome b6-f complex, which mediates electron transfer between photosystem II (PSII) and photosystem I (PSI), cyclic electron flow around PSI, and state transitions. PetG is required for either the stability or assembly of the cytochrome b6-f complex. This is Cytochrome b6-f complex subunit 5 from Prochlorococcus marinus (strain MIT 9211).